A 567-amino-acid chain; its full sequence is Urease subunit alpha (567 aa).

The Urease domain occupies 129–567; sequence GGVDTHIHWI…LPMAQRYFLF (439 aa). Ni(2+)-binding residues include histidine 134, histidine 136, and lysine 217. Lysine 217 is modified (N6-carboxylysine). Substrate is bound at residue histidine 219. Residues histidine 246 and histidine 272 each coordinate Ni(2+). The active-site Proton donor is the histidine 320. Residue aspartate 360 coordinates Ni(2+).

Belongs to the metallo-dependent hydrolases superfamily. Urease alpha subunit family. As to quaternary structure, heterotrimer of UreA (gamma), UreB (beta) and UreC (alpha) subunits. Three heterotrimers associate to form the active enzyme. Ni cation serves as cofactor. In terms of processing, carboxylation allows a single lysine to coordinate two nickel ions.

Its subcellular location is the cytoplasm. The enzyme catalyses urea + 2 H2O + H(+) = hydrogencarbonate + 2 NH4(+). It participates in nitrogen metabolism; urea degradation; CO(2) and NH(3) from urea (urease route): step 1/1. This chain is Urease subunit alpha, found in Escherichia coli O157:H7.